A 1128-amino-acid polypeptide reads, in one-letter code: Large proline-rich protein BAG6 (1128 aa).

An N-acetylmethionine modification is found at Met1. The Ubiquitin-like domain maps to 17-92 (LEVLVKTLDS…HLVERAPPQT (76 aa)). Disordered regions lie at residues 87–126 (RAPPQTQLPSGASSGTGSASATHGGGPPPGTRGPGASVHD), 185–267 (CRGG…NHPS), 380–435 (VTMT…AASH), 456–523 (IQDS…ALPG), and 555–598 (PGMA…SASD). The segment covering 95–108 (PSGASSGTGSASAT) has biased composition (low complexity). Phosphoserine is present on Ser96. Residue Thr117 is modified to Phosphothreonine. Positions 189–201 (SQAQHSQPPSQMP) are enriched in polar residues. The stretch at 236 to 265 (RASAQSPGLSPSGPAPAGPTPAPETNAPNH) is repeat 1. Residues 236–630 (RASAQSPGLS…MTSPTITVAM (395 aa)) form a 4 X 29 AA approximate repeats region. Residues 238–247 (SAQSPGLSPS) are compositionally biased toward low complexity. Pro residues-rich tracts occupy residues 248-257 (GPAPAGPTPA) and 388-402 (RPPPTPNAEAPPPGP). Low complexity predominate over residues 403-412 (GQASSLAPSS). Repeat 2 spans residues 410–438 (PSSTTVESSTEGAPPPGPAPPPAASHPRV). 2 stretches are compositionally biased toward pro residues: residues 422 to 433 (APPPGPAPPPAA) and 502 to 515 (PTPPQSRPSHPGGP). A compositionally biased stretch (low complexity) spans 564 to 581 (ATASASAGTTNTATTAGP). Repeat copies occupy residues 569-596 (SAGTTNTATTAGPAPGGPAQPPPPQPSA) and 602-630 (SQLLGNLLGPAGPGAGGPGMTSPTITVAM). The span at 583 to 594 (PGGPAQPPPPQP) shows a compositional bias: pro residues. Disordered regions lie at residues 648-689 (QTAA…GLGP) and 939-1128 (VGDP…AEDP). Residues 652–677 (PPAPPPPPPPPPPAPEQQTAPPPGSP) are compositionally biased toward pro residues. Gly residues predominate over residues 678-688 (PGGAGSPGGLG). Phosphoserine is present on residues Ser960 and Ser969. Positions 999–1016 (AAAETEPWAAAVPPEWVP) are enriched in low complexity. A required for interaction with GET4 region spans residues 1006 to 1036 (WAAAVPPEWVPIIQQDIQSQRKVKPQPPLSD). The Nuclear localization site motif lies at 1008 to 1050 (AAVPPEWVPIIQQDIQSQRKVKPQPPLSDAYLSGMPAKRRKTM). The segment at 1018 to 1128 (IQQDIQSQRK…NAHRAFAEDP (111 aa)) is sufficient for the delivery of client proteins to the endoplasmic reticulum. Thr1049 carries the post-translational modification Phosphothreonine. The segment at 1054-1111 (GPQLLLSEAVSRAAKAAGARPLTSPESLSRDLEAPEVQESYRQQLRADIQKRLQEDPN) is BAG-similar domain, required and sufficient for interaction with UBL4A. Residues 1062 to 1072 (AVSRAAKAAGA) are compositionally biased toward low complexity. Residues Ser1077 and Ser1113 each carry the phosphoserine modification.

As to quaternary structure, component of the BAG6/BAT3 complex, also named BAT3 complex, at least composed of BAG6, UBL4A and GET4/TRC35. Interacts with GET4; the interaction is direct and localizes BAG6 in the cytosol. Interacts with UBL4A; the interaction is direct and required for UBL4A protein stability. Interacts with AIFM1. Interacts with HSPA2. Interacts with CTCFL. Interacts with p300/EP300. Interacts (via ubiquitin-like domain) with RNF126; required for BAG6-dependent ubiquitination of proteins mislocalized to the cytosol. Interacts (via ubiquitin-like domain) with SGTA; SGTA competes with RNF126 by binding the same region of BAG6, thereby promoting deubiquitination of BAG6-target proteins and rescuing them from degradation. Interacts with ricin A chain. Interacts with VCP and AMFR; both form the VCP/p97-AMFR/gp78 complex. Interacts with SYVN1. Interacts with USP13; the interaction is direct and may mediate UBL4A deubiquitination. Interacts with ZFAND2B. Interacts with KPNA2. Interacts with UBQLN4. In terms of processing, ricin can induce a cleavage by the caspase CASP3. The released C-terminal peptide induces apoptosis.

It is found in the cytoplasm. It localises to the cytosol. The protein localises to the nucleus. Its subcellular location is the secreted. The protein resides in the extracellular exosome. ATP-independent molecular chaperone preventing the aggregation of misfolded and hydrophobic patches-containing proteins. Functions as part of a cytosolic protein quality control complex, the BAG6/BAT3 complex, which maintains these client proteins in a soluble state and participates in their proper delivery to the endoplasmic reticulum or alternatively can promote their sorting to the proteasome where they undergo degradation. The BAG6/BAT3 complex is involved in the post-translational delivery of tail-anchored/type II transmembrane proteins to the endoplasmic reticulum membrane. Recruited to ribosomes, it interacts with the transmembrane region of newly synthesized tail-anchored proteins and together with SGTA and ASNA1 mediates their delivery to the endoplasmic reticulum. Client proteins that cannot be properly delivered to the endoplasmic reticulum are ubiquitinated by RNF126, an E3 ubiquitin-protein ligase associated with BAG6 and are sorted to the proteasome. SGTA which prevents the recruitment of RNF126 to BAG6 may negatively regulate the ubiquitination and the proteasomal degradation of client proteins. Similarly, the BAG6/BAT3 complex also functions as a sorting platform for proteins of the secretory pathway that are mislocalized to the cytosol either delivering them to the proteasome for degradation or to the endoplasmic reticulum. The BAG6/BAT3 complex also plays a role in the endoplasmic reticulum-associated degradation (ERAD), a quality control mechanism that eliminates unwanted proteins of the endoplasmic reticulum through their retrotranslocation to the cytosol and their targeting to the proteasome. It maintains these retrotranslocated proteins in an unfolded yet soluble state condition in the cytosol to ensure their proper delivery to the proteasome. BAG6 is also required for selective ubiquitin-mediated degradation of defective nascent chain polypeptides by the proteasome. In this context, it may participate in the production of antigenic peptides and play a role in antigen presentation in immune response. BAG6 is also involved in endoplasmic reticulum stress-induced pre-emptive quality control, a mechanism that selectively attenuates the translocation of newly synthesized proteins into the endoplasmic reticulum and reroutes them to the cytosol for proteasomal degradation. BAG6 may ensure the proper degradation of these proteins and thereby protects the endoplasmic reticulum from protein overload upon stress. By inhibiting the polyubiquitination and subsequent proteasomal degradation of HSPA2 it may also play a role in the assembly of the synaptonemal complex during spermatogenesis. Also positively regulates apoptosis by interacting with and stabilizing the proapoptotic factor AIFM1. By controlling the steady-state expression of the IGF1R receptor, indirectly regulates the insulin-like growth factor receptor signaling pathway. Functionally, involved in DNA damage-induced apoptosis: following DNA damage, accumulates in the nucleus and forms a complex with p300/EP300, enhancing p300/EP300-mediated p53/TP53 acetylation leading to increase p53/TP53 transcriptional activity. When nuclear, may also act as a component of some chromatin regulator complex that regulates histone 3 'Lys-4' dimethylation (H3K4me2). In terms of biological role, released extracellularly via exosomes, it is a ligand of the natural killer/NK cells receptor NCR3 and stimulates NK cells cytotoxicity. It may thereby trigger NK cells cytotoxicity against neighboring tumor cells and immature myeloid dendritic cells (DC). Its function is as follows. May mediate ricin-induced apoptosis. The polypeptide is Large proline-rich protein BAG6 (Sus scrofa (Pig)).